A 208-amino-acid chain; its full sequence is Interleukin-6 (208 aa).

The signal sequence occupies residues Met1 to Ala20. Cys67 and Cys73 form a disulfide bridge. Ser76 carries the post-translational modification Phosphoserine. A disulfide bond links Cys96 and Cys106. Asn167 carries an N-linked (GlcNAc...) asparagine glycan.

Belongs to the IL-6 superfamily. As to quaternary structure, component of a hexamer of two molecules each of IL6, IL6R and IL6ST; first binds to IL6R to associate with the signaling subunit IL6ST. Interacts with IL6R (via the N-terminal ectodomain); this interaction may be affected by IL6R-binding with SORL1, hence decreasing IL6 cis signaling. Interacts with SORL1 (via the N-terminal ectodomain); this interaction leads to IL6 internalization and lysosomal degradation. May form a trimeric complex with the soluble SORL1 ectodomain and soluble IL6R receptor; this interaction might stabilize circulating IL6, hence promoting IL6 trans signaling.

The protein localises to the secreted. In terms of biological role, cytokine with a wide variety of biological functions in immunity, tissue regeneration, and metabolism. Binds to IL6R, then the complex associates to the signaling subunit IL6ST/gp130 to trigger the intracellular IL6-signaling pathway. The interaction with the membrane-bound IL6R and IL6ST stimulates 'classic signaling', whereas the binding of IL6 and soluble IL6R to IL6ST stimulates 'trans-signaling'. Alternatively, 'cluster signaling' occurs when membrane-bound IL6:IL6R complexes on transmitter cells activate IL6ST receptors on neighboring receiver cells. Its function is as follows. IL6 is a potent inducer of the acute phase response. Rapid production of IL6 contributes to host defense during infection and tissue injury, but excessive IL6 synthesis is involved in disease pathology. In the innate immune response, is synthesized by myeloid cells, such as macrophages and dendritic cells, upon recognition of pathogens through toll-like receptors (TLRs) at the site of infection or tissue injury. In the adaptive immune response, is required for the differentiation of B cells into immunoglobulin-secreting cells. Plays a major role in the differentiation of CD4(+) T cell subsets. Essential factor for the development of T follicular helper (Tfh) cells that are required for the induction of germinal-center formation. Required to drive naive CD4(+) T cells to the Th17 lineage. Also required for proliferation of myeloma cells and the survival of plasmablast cells. Acts as an essential factor in bone homeostasis and on vessels directly or indirectly by induction of VEGF, resulting in increased angiogenesis activity and vascular permeability. Induces, through 'trans-signaling' and synergistically with IL1B and TNF, the production of VEGF. Involved in metabolic controls, is discharged into the bloodstream after muscle contraction increasing lipolysis and improving insulin resistance. 'Trans-signaling' in central nervous system also regulates energy and glucose homeostasis. Mediates, through GLP-1, crosstalk between insulin-sensitive tissues, intestinal L cells and pancreatic islets to adapt to changes in insulin demand. Also acts as a myokine. Plays a protective role during liver injury, being required for maintenance of tissue regeneration. Also has a pivotal role in iron metabolism by regulating HAMP/hepcidin expression upon inflammation or bacterial infection. Through activation of IL6ST-YAP-NOTCH pathway, induces inflammation-induced epithelial regeneration. The polypeptide is Interleukin-6 (IL6) (Delphinapterus leucas (Beluga whale)).